The following is a 101-amino-acid chain: Gibberellin-regulated protein 6 (101 aa).

The signal sequence occupies residues 1–23; that stretch reads MAKLITSFLLLTILFTFVCLTMS.

This sequence belongs to the GASA family. In terms of processing, six disulfide bonds may be present.

It localises to the secreted. Gibberellin-regulated protein that may function in hormonal controlled steps of development such as seed germination, flowering and seed maturation. The chain is Gibberellin-regulated protein 6 (GASA6) from Arabidopsis thaliana (Mouse-ear cress).